The following is a 288-amino-acid chain: Threonine-rich protein (288 aa).

The first 20 residues, M1–S20, serve as a signal peptide directing secretion. Residues T141–G150 show a composition bias toward polar residues. The interval T141–T260 is disordered. The segment covering N151–P253 has biased composition (low complexity).

As to expression, component of the acid-insoluble and acid-soluble organic matrix of the aragonitic skeleton (at protein level).

It is found in the secreted. The polypeptide is Threonine-rich protein (Acropora millepora (Staghorn coral)).